Here is a 70-residue protein sequence, read N- to C-terminus: Protein SlyX homolog (70 aa).

It belongs to the SlyX family.

The protein is Protein SlyX homolog of Rhizobium meliloti (strain 1021) (Ensifer meliloti).